The sequence spans 374 residues: Pulmonary surfactant-associated protein D (374 aa).

An N-terminal signal peptide occupies residues 1-19 (MLHFLSMLVLLVQPLGDLG). Cysteine 34 and cysteine 39 each carry S-nitrosocysteine. Residues 40–221 (SPTENGLPGR…RGIKGESGLP (182 aa)) form a disordered region. The Collagen-like domain occupies 45-221 (GLPGRDGRDG…RGIKGESGLP (177 aa)). A compositionally biased stretch (basic and acidic residues) spans 49-64 (RDGRDGREGPRGEKGD). Hydroxyproline is present on proline 77. Lysine 86 is subject to 5-hydroxylysine. An N-linked (GlcNAc...) asparagine glycan is attached at asparagine 89. Hydroxyproline is present on proline 95. Lysine 98 carries the 5-hydroxylysine modification. A Phosphoserine modification is found at serine 109. Low complexity-rich tracts occupy residues 137-163 (KGEA…PAGP) and 170-200 (PGEQ…RGPP). Hydroxyproline occurs at positions 170 and 176. Positions 203–215 (KGDRGAPGDRGIK) are enriched in basic and acidic residues. Residues 222–253 (DSAALRQQMEALNGKLQRLEAAFSRYKKAALF) are a coiled coil. Residues 259–374 (VGDKIFRAAN…GEQRLVICEF (116 aa)) enclose the C-type lectin domain. 2 cysteine pairs are disulfide-bonded: cysteine 280–cysteine 372 and cysteine 350–cysteine 364.

Belongs to the SFTPD family. As to quaternary structure, oligomeric complex of 4 set of homotrimers. S-nitrosylation at Cys-34 and Cys-39 alters the quaternary structure which results in a pro-inflammatory chemoattractive signaling activity with macrophages.

The protein localises to the secreted. It localises to the extracellular space. The protein resides in the extracellular matrix. Its subcellular location is the surface film. In terms of biological role, contributes to the lung's defense against inhaled microorganisms, organic antigens and toxins. Interacts with compounds such as bacterial lipopolysaccharides, oligosaccharides and fatty acids and modulates leukocyte action in immune response. May participate in the extracellular reorganization or turnover of pulmonary surfactant. Binds strongly maltose residues and to a lesser extent other alpha-glucosyl moieties. This is Pulmonary surfactant-associated protein D (Sftpd) from Rattus norvegicus (Rat).